We begin with the raw amino-acid sequence, 212 residues long: Pyridoxine/pyridoxamine 5'-phosphate oxidase (212 aa).

Residues 7–10 (RRQY) and K65 each bind substrate. FMN is bound by residues 60–65 (RIVLLK), 75–76 (FT), R81, K82, and Q104. 3 residues coordinate substrate: Y122, R126, and S130. FMN is bound by residues 139-140 (QS) and W184. 190–192 (RLH) is a substrate binding site. Residue R194 participates in FMN binding.

It belongs to the pyridoxamine 5'-phosphate oxidase family. As to quaternary structure, homodimer. Requires FMN as cofactor.

It carries out the reaction pyridoxamine 5'-phosphate + O2 + H2O = pyridoxal 5'-phosphate + H2O2 + NH4(+). It catalyses the reaction pyridoxine 5'-phosphate + O2 = pyridoxal 5'-phosphate + H2O2. The protein operates within cofactor metabolism; pyridoxal 5'-phosphate salvage; pyridoxal 5'-phosphate from pyridoxamine 5'-phosphate: step 1/1. It functions in the pathway cofactor metabolism; pyridoxal 5'-phosphate salvage; pyridoxal 5'-phosphate from pyridoxine 5'-phosphate: step 1/1. Functionally, catalyzes the oxidation of either pyridoxine 5'-phosphate (PNP) or pyridoxamine 5'-phosphate (PMP) into pyridoxal 5'-phosphate (PLP). This is Pyridoxine/pyridoxamine 5'-phosphate oxidase from Alteromonas mediterranea (strain DSM 17117 / CIP 110805 / LMG 28347 / Deep ecotype).